Consider the following 245-residue polypeptide: Small ribosomal subunit protein uS3 (245 aa).

The KH type-2 domain maps to 39-107; it reads IRKAIREKLK…EVRVNLVEIR (69 aa). The tract at residues 216–245 is disordered; it reads DKRLETSGQSRARANTNQRGPASGAQAAGA. Residues 221–235 show a composition bias toward polar residues; sequence TSGQSRARANTNQRG.

This sequence belongs to the universal ribosomal protein uS3 family. Part of the 30S ribosomal subunit. Forms a tight complex with proteins S10 and S14.

Its function is as follows. Binds the lower part of the 30S subunit head. Binds mRNA in the 70S ribosome, positioning it for translation. The sequence is that of Small ribosomal subunit protein uS3 from Hyphomonas neptunium (strain ATCC 15444).